A 487-amino-acid polypeptide reads, in one-letter code: Calcium-dependent mitochondrial ATP-magnesium/phosphate carrier protein 2 (487 aa).

The Mitochondrial intermembrane segment spans residues 1 to 211 (MEATKSSKQN…ISKHIKRSNY (211 aa)). EF-hand domains lie at 36 to 71 (ERDLRIRSLFSFFDSENVGYLDCAQIEKGLCALQIP), 72 to 107 (SGYKYAKELFRVCDANRDGRVDYHEFRRYMDDKELE), 108 to 138 (LYRIFQAIDVEHNGCISPEGLWDSLVKAGIE), and 139 to 174 (IKDEELARFVEHVDKDNDGIIMFEEWRDFLLLYPHE). Positions 85, 87, 89, 91, and 96 each coordinate Ca(2+). Positions 152, 154, 156, and 163 each coordinate Ca(2+). 3 Solcar repeats span residues 206–289 (IKRS…FKNA), 301–389 (IGTT…LKDL), and 400–483 (PGPL…MKKS). The chain crosses the membrane as a helical span at residues 212–229 (FIAGGIAGAASRTATAPL). Over 230-263 (DRLKVLLQIQKTDARIREAIKLIWKQGGVRGFFR) the chain is Mitochondrial matrix. The helical transmembrane segment at 264-283 (GNGLNIVKVAPESAIKFYAY) threads the bilayer. The Mitochondrial intermembrane portion of the chain corresponds to 284–310 (ELFKNAIGENMGEDKADIGTTVRLFAG). Residues 311–324 (GMAGAVAQASIYPL) traverse the membrane as a helical segment. The Mitochondrial matrix segment spans residues 325–363 (DLVKTRLQTYTSQAGVAVPRLGTLTKDILVHEGPRAFYK). A helical transmembrane segment spans residues 364 to 383 (GLFPSLLGIIPYAGIDLAAY). Topologically, residues 384-405 (ETLKDLSRTYILQDAEPGPLVQ) are mitochondrial intermembrane. Residues 406–423 (LGCGTISGALGATCVYPL) traverse the membrane as a helical segment. At 424-457 (QVVRTRMQAERARTSMSGVFRRTISEEGYRALYK) the chain is on the mitochondrial matrix side. A helical transmembrane segment spans residues 458–477 (GLLPNLLKVVPAASITYMVY). The Mitochondrial intermembrane portion of the chain corresponds to 478–487 (EAMKKSLELD).

Belongs to the mitochondrial carrier (TC 2.A.29) family. In terms of tissue distribution, expressed in flowers, leaves, stems, roots and seedlings, mostly in aerial parts.

The protein resides in the mitochondrion inner membrane. With respect to regulation, counter-exchange transport activity is saturable and inhibited by pyridoxal-5'-phosphate, EDTA and EGTA. Activated by calcium Ca(2+) and manganese Mn(2+) ions, and slightly by iron Fe(2+) and zinc Zn(2+) ions. Repressed by copper ions Cu(2+) and slightly by magnesium Mg(2+) ions. Magnesium Mg(2+) ions promotes slightly ATP uptake, ATP-Mg(2+) being exchanged with ATP(4-). In terms of biological role, calcium-dependent mitochondrial carrier protein that catalyzes the import of ATP co-transported with metal divalent cations across the mitochondrial inner membrane in exchange for phosphate (Pi). Can transport phosphate, AMP, ADP, ATP, adenosine 5'-phosphosulfate, sulfate and thiosulfate, and, to a lesser extent, other nucleotides. Binds calcium ions Ca(2+). Also mediates calcium uptake. This Arabidopsis thaliana (Mouse-ear cress) protein is Calcium-dependent mitochondrial ATP-magnesium/phosphate carrier protein 2.